Reading from the N-terminus, the 245-residue chain is Flavin-dependent thymidylate synthase (245 aa).

The ThyX domain occupies 5 to 210 (IRVKLVNYTK…ELRPIIKWAK (206 aa)). Residues Ser-59, 83 to 85 (RHR), and Gln-91 contribute to the FAD site. Residues 80 to 83 (QLVR), 91 to 95 (QQSQR), and Arg-149 contribute to the dUMP site. A ThyX motif motif is present at residues 83-93 (RHRLASYTQQS). FAD-binding positions include 165-167 (NLR) and His-171. Residue Arg-176 coordinates dUMP. Residue Arg-176 is the Involved in ionization of N3 of dUMP, leading to its activation of the active site.

Belongs to the thymidylate synthase ThyX family. In terms of assembly, homotetramer. Requires FAD as cofactor.

The catalysed reaction is dUMP + (6R)-5,10-methylene-5,6,7,8-tetrahydrofolate + NADPH + H(+) = dTMP + (6S)-5,6,7,8-tetrahydrofolate + NADP(+). Its pathway is pyrimidine metabolism; dTTP biosynthesis. Its function is as follows. Catalyzes the reductive methylation of 2'-deoxyuridine-5'-monophosphate (dUMP) to 2'-deoxythymidine-5'-monophosphate (dTMP) while utilizing 5,10-methylenetetrahydrofolate (mTHF) as the methyl donor, and NADPH and FADH(2) as the reductant. In Thermococcus kodakarensis (strain ATCC BAA-918 / JCM 12380 / KOD1) (Pyrococcus kodakaraensis (strain KOD1)), this protein is Flavin-dependent thymidylate synthase.